The primary structure comprises 527 residues: Bifunctional purine biosynthesis protein PurH (527 aa).

The region spanning 1–149 (MASDFLPVRR…KNFARVAVAA (149 aa)) is the MGS-like domain.

It belongs to the PurH family.

It carries out the reaction (6R)-10-formyltetrahydrofolate + 5-amino-1-(5-phospho-beta-D-ribosyl)imidazole-4-carboxamide = 5-formamido-1-(5-phospho-D-ribosyl)imidazole-4-carboxamide + (6S)-5,6,7,8-tetrahydrofolate. The catalysed reaction is IMP + H2O = 5-formamido-1-(5-phospho-D-ribosyl)imidazole-4-carboxamide. Its pathway is purine metabolism; IMP biosynthesis via de novo pathway; 5-formamido-1-(5-phospho-D-ribosyl)imidazole-4-carboxamide from 5-amino-1-(5-phospho-D-ribosyl)imidazole-4-carboxamide (10-formyl THF route): step 1/1. It participates in purine metabolism; IMP biosynthesis via de novo pathway; IMP from 5-formamido-1-(5-phospho-D-ribosyl)imidazole-4-carboxamide: step 1/1. The chain is Bifunctional purine biosynthesis protein PurH from Xanthomonas axonopodis pv. citri (strain 306).